The chain runs to 1323 residues: Glutamate receptor ionotropic, NMDA 2D (1323 aa).

The first 27 residues, 1–27 (MRGAGGPRGPRGPAKMLLLLALACASP), serve as a signal peptide directing secretion. Over 28–579 (FPEEVPGPGA…SPSAFLEPYS (552 aa)) the chain is Extracellular. The N-linked (GlcNAc...) asparagine glycan is linked to Asn89. Cys101 and Cys345 are oxidised to a cystine. Residues Asn349, Asn363, Asn381, and Asn464 are each glycosylated (N-linked (GlcNAc...) asparagine). 2 disulfide bridges follow: Cys452–Cys480 and Cys459–Cys481. Residues Ser536, Thr538, and Arg543 each coordinate L-glutamate. The N-linked (GlcNAc...) asparagine glycan is linked to Asn566. A helical membrane pass occupies residues 580–601 (PAVWVMMFVMCLTVVAVTVFIF). Over 602-626 (EYLSPVGYNRSLATGKRPGGSTFTI) the chain is Cytoplasmic. An intramembrane region (discontinuously helical) is located at residues 627–638 (GKSIWLLWALVF). Residues 628-647 (KSIWLLWALVFNNSVPVENP) are pore-forming. The Cytoplasmic segment spans residues 639-650 (NNSVPVENPRGT). A helical transmembrane segment spans residues 651-671 (TSKIMVLVWAFFAVIFLASYT). Residues 672–840 (ANLAAFMIQE…EVMSSKLDID (169 aa)) lie on the Extracellular side of the membrane. An N-linked (GlcNAc...) asparagine glycan is attached at Asn712. L-glutamate is bound by residues Ser714, Thr715, and Asp756. Cysteines 770 and 825 form a disulfide. A helical transmembrane segment spans residues 841 to 864 (NMAGVFYMLLVAMGLSLLVFAWEH). Residues 865-1323 (LVYWRLRHCL…AHFSSLESEV (459 aa)) are Cytoplasmic-facing. 3 disordered regions span residues 897–952 (EAAP…PGGA), 977–1112 (AAPR…SLGG), and 1201–1323 (PWAA…ESEV). Positions 899 to 929 (APPPAKPPPPPQPLPSPAYPAARPPPGPAPF) are enriched in pro residues. Residues 931 to 940 (PRERAAADRW) are compositionally biased toward basic and acidic residues. Over residues 977 to 986 (AAPRGAAGRP) the composition is skewed to low complexity. Positions 987–1001 (LSPPTTQPPQKPPPS) are enriched in pro residues. The segment covering 1030-1039 (AAAAAAVGPP) has biased composition (low complexity). Residues 1080 to 1092 (TAPPPRRAAPPPC) show a composition bias toward pro residues. A compositionally biased stretch (basic residues) spans 1208-1228 (PRRRARCGCPRPHPHRPRASH). Arg1303 is modified (omega-N-methylarginine). Phosphoserine is present on Ser1313. The PDZ-binding motif lies at 1321–1323 (SEV).

It belongs to the glutamate-gated ion channel (TC 1.A.10.1) family. NR2D/GRIN2D subfamily. Heterotetramer. Forms heterotetrameric channels composed of two GluN1/zeta subunits (GRIN1), and two identical GluN2/epsilon subunits (GRIN2A, GRIN2B, GRIN2C or GRIN2D) or GluN3 subunits (GRIN3A or GRIN3B) (in vitro). In vivo, the subunit composition may depend on the expression levels of the different subunits. Interacts with PDZ domains of PATJ and DLG4. As to expression, expressed in brain, mainly in the subcortical region.

It is found in the cell membrane. The protein resides in the postsynaptic cell membrane. It carries out the reaction Ca(2+)(in) = Ca(2+)(out). It catalyses the reaction Na(+)(in) = Na(+)(out). The enzyme catalyses K(+)(in) = K(+)(out). Its function is as follows. Component of N-methyl-D-aspartate (NMDA) receptors (NMDARs) that function as heterotetrameric, ligand-gated cation channels with high calcium permeability and voltage-dependent block by Mg(2+). Participates in synaptic plasticity for learning and memory formation. Channel activation requires binding of the neurotransmitter L-glutamate to the GluN2 subunit, glycine or D-serine binding to the GluN1 subunit, plus membrane depolarization to eliminate channel inhibition by Mg(2+). NMDARs mediate simultaneously the potasium efflux and the influx of calcium and sodium. Each GluN2 subunit confers differential attributes to channel properties, including activation, deactivation and desensitization kinetics, pH sensitivity, Ca2(+) permeability, and binding to allosteric modulators. This is Glutamate receptor ionotropic, NMDA 2D from Rattus norvegicus (Rat).